The sequence spans 186 residues: Peptidyl-tRNA hydrolase (186 aa).

Tyr14 is a tRNA binding site. His19 serves as the catalytic Proton acceptor. Residues Tyr64, Asn66, and Asn112 each coordinate tRNA.

This sequence belongs to the PTH family. Monomer.

Its subcellular location is the cytoplasm. It carries out the reaction an N-acyl-L-alpha-aminoacyl-tRNA + H2O = an N-acyl-L-amino acid + a tRNA + H(+). Hydrolyzes ribosome-free peptidyl-tRNAs (with 1 or more amino acids incorporated), which drop off the ribosome during protein synthesis, or as a result of ribosome stalling. In terms of biological role, catalyzes the release of premature peptidyl moieties from peptidyl-tRNA molecules trapped in stalled 50S ribosomal subunits, and thus maintains levels of free tRNAs and 50S ribosomes. The polypeptide is Peptidyl-tRNA hydrolase (Bacillus anthracis).